Here is a 154-residue protein sequence, read N- to C-terminus: Ribonuclease H (154 aa).

The RNase H type-1 domain maps to 1 to 142; the sequence is MLKHIDLYTD…CDELARDAAS (142 aa). Mg(2+) is bound by residues aspartate 10, glutamate 48, aspartate 70, and aspartate 134. Over residues 126 to 147 the composition is skewed to basic and acidic residues; sequence GHPENERCDELARDAASGKELA. Residues 126–154 are disordered; it reads GHPENERCDELARDAASGKELAEDTGYQP.

It belongs to the RNase H family. As to quaternary structure, monomer. The cofactor is Mg(2+).

It is found in the cytoplasm. The enzyme catalyses Endonucleolytic cleavage to 5'-phosphomonoester.. Functionally, endonuclease that specifically degrades the RNA of RNA-DNA hybrids. The chain is Ribonuclease H from Aeromonas salmonicida (strain A449).